The chain runs to 368 residues: 3-dehydroquinate synthase (368 aa).

NAD(+) contacts are provided by residues 71 to 76, 105 to 109, 129 to 130, Lys-142, and Lys-151; these read DGEAAK, GATTD, and TT. Glu-184, His-247, and His-263 together coordinate Zn(2+).

It belongs to the sugar phosphate cyclases superfamily. Dehydroquinate synthase family. Requires Co(2+) as cofactor. Zn(2+) is required as a cofactor. The cofactor is NAD(+).

It localises to the cytoplasm. The enzyme catalyses 7-phospho-2-dehydro-3-deoxy-D-arabino-heptonate = 3-dehydroquinate + phosphate. Its pathway is metabolic intermediate biosynthesis; chorismate biosynthesis; chorismate from D-erythrose 4-phosphate and phosphoenolpyruvate: step 2/7. Functionally, catalyzes the conversion of 3-deoxy-D-arabino-heptulosonate 7-phosphate (DAHP) to dehydroquinate (DHQ). The protein is 3-dehydroquinate synthase of Thermobifida fusca (strain YX).